Consider the following 126-residue polypeptide: MSVPTLSNKPETVDLLVLAPGEKKVTCTISDKGDCNIFVIKLEDHTIGNLIKIQLCQDPKVLFAAYRQPHPLQNAIEITIKPKGYAGVKLLSDNVNNILSQVATLKENFAKKIQKYKESNSYYEDY.

The protein belongs to the archaeal Rpo11/eukaryotic RPB11/RPC19 RNA polymerase subunit family. In terms of assembly, component of the RNA polymerase II (Pol II) complex consisting of 12 subunits.

It is found in the nucleus. Its function is as follows. DNA-dependent RNA polymerase catalyzes the transcription of DNA into RNA using the four ribonucleoside triphosphates as substrates. Component of RNA polymerase II which synthesizes mRNA precursors and many functional non-coding RNAs. Pol II is the central component of the basal RNA polymerase II transcription machinery. It is composed of mobile elements that move relative to each other. RPB11 is part of the core element with the central large cleft. The polypeptide is Probable DNA-directed RNA polymerase II subunit RPB11 (Plasmodium falciparum (isolate 3D7)).